The following is a 199-amino-acid chain: Probable GTP-binding protein EngB (199 aa).

The 172-residue stretch at 28–199 (DLPEIALAGR…DSWDAILEQV (172 aa)) folds into the EngB-type G domain. Residues 36-43 (GRSNVGKS), 63-67 (GKTQL), 81-84 (DVPG), 148-151 (TKAD), and 180-182 (FSS) each bind GTP. Mg(2+)-binding residues include S43 and T65.

Belongs to the TRAFAC class TrmE-Era-EngA-EngB-Septin-like GTPase superfamily. EngB GTPase family. Mg(2+) is required as a cofactor.

Functionally, necessary for normal cell division and for the maintenance of normal septation. The chain is Probable GTP-binding protein EngB from Streptococcus pyogenes serotype M18 (strain MGAS8232).